A 100-amino-acid chain; its full sequence is Integration host factor subunit alpha (100 aa).

It belongs to the bacterial histone-like protein family. In terms of assembly, heterodimer of an alpha and a beta chain.

Its function is as follows. This protein is one of the two subunits of integration host factor, a specific DNA-binding protein that functions in genetic recombination as well as in transcriptional and translational control. In Caulobacter sp. (strain K31), this protein is Integration host factor subunit alpha.